We begin with the raw amino-acid sequence, 241 residues long: MTFSRPSGRTADQLRPVRIERAFTRHAEGSVLVSFGDTRVLCTASVENRVPGFLRGKGEGWVTAEYGMLPRSTHTRSDREAARGKQGGRTLEIQRLIGRALRACVDRNALGERTITLDCDVLQADGGTRTAAITGAYVALADAVNLLIKRGDIKKHPLIGAVAAVSVGIYRGEPVLDLDYPEDSDCDTDMNVVMNDGGGFIELQGTAEGHAFRRDELNALLALAEKGMGELFALQRAALAG.

Residues Arg-89 and 127-129 (GTR) contribute to the phosphate site.

The protein belongs to the RNase PH family. In terms of assembly, homohexameric ring arranged as a trimer of dimers.

The catalysed reaction is tRNA(n+1) + phosphate = tRNA(n) + a ribonucleoside 5'-diphosphate. In terms of biological role, phosphorolytic 3'-5' exoribonuclease that plays an important role in tRNA 3'-end maturation. Removes nucleotide residues following the 3'-CCA terminus of tRNAs; can also add nucleotides to the ends of RNA molecules by using nucleoside diphosphates as substrates, but this may not be physiologically important. Probably plays a role in initiation of 16S rRNA degradation (leading to ribosome degradation) during starvation. This is Ribonuclease PH from Xanthomonas euvesicatoria pv. vesicatoria (strain 85-10) (Xanthomonas campestris pv. vesicatoria).